Here is a 40-residue protein sequence, read N- to C-terminus: Photosystem II reaction center protein J (40 aa).

The helical transmembrane segment at 8-28 (IPLWLIGTVTGILVIGLLGIF) threads the bilayer.

Belongs to the PsbJ family. PSII is composed of 1 copy each of membrane proteins PsbA, PsbB, PsbC, PsbD, PsbE, PsbF, PsbH, PsbI, PsbJ, PsbK, PsbL, PsbM, PsbT, PsbX, PsbY, PsbZ, Psb30/Ycf12, at least 3 peripheral proteins of the oxygen-evolving complex and a large number of cofactors. It forms dimeric complexes.

It is found in the plastid. The protein localises to the chloroplast thylakoid membrane. Functionally, one of the components of the core complex of photosystem II (PSII). PSII is a light-driven water:plastoquinone oxidoreductase that uses light energy to abstract electrons from H(2)O, generating O(2) and a proton gradient subsequently used for ATP formation. It consists of a core antenna complex that captures photons, and an electron transfer chain that converts photonic excitation into a charge separation. The chain is Photosystem II reaction center protein J from Angiopteris evecta (Mule's foot fern).